A 485-amino-acid polypeptide reads, in one-letter code: Tektin-5 (485 aa).

4 coiled-coil regions span residues 113–185 (SRLT…EVNC), 225–251 (QQQM…ALER), 342–385 (FNAR…MAKE), and 423–443 (DDTL…LQLL).

This sequence belongs to the tektin family. As to quaternary structure, microtubule inner protein component of sperm flagellar doublet microtubules. Interacts with TEKT3. Ubiquitinated, leading to its degradation. Deubiquitinated by USP16, promoting its stability.

It localises to the cytoplasm. The protein resides in the cytoskeleton. Its subcellular location is the flagellum axoneme. Its function is as follows. Sperm-specific microtubule inner protein (MIP) part of the dynein-decorated doublet microtubules (DMTs) in flagellar axoneme. Forms an extensive interaction network in different conformations that reinforces the helix bundle composed by other tektin proteins (TEKT1 to TEKT4) and MIPs to anchor the tektin bundle onto the tubulin wall of A-tubule of the sperm flagellum. The protein is Tektin-5 (TEKT5) of Macaca fascicularis (Crab-eating macaque).